Here is a 25-residue protein sequence, read N- to C-terminus: GWASKIGQTLGKMAKVGLHELIQPK.

As to expression, expressed by the skin glands.

It localises to the secreted. Antimicrobial peptide. This chain is Xenoposin precursor fragment BM1, found in Xenopus boumbaensis (Mawa clawed frog).